Here is a 467-residue protein sequence, read N- to C-terminus: Neurexin-1-beta (467 aa).

The first 45 residues, 1 to 45 (MYQRMLRCGAELGSPGGGGGGAGGRLALLWIVPLTLSGLLGVAWG), serve as a signal peptide directing secretion. Residues 46–391 (ASSLGAHHIH…EVIRESSSTT (346 aa)) are Extracellular-facing. The Laminin G-like domain occupies 86–284 (YIFSKGGGQI…DANIAIVGNV (199 aa)). Positions 136 and 153 each coordinate Ca(2+). An N-linked (GlcNAc...) asparagine glycan is attached at asparagine 183. The interval 200–229 (GNNDNERLAIARQRIPYRLGRVVDEWLLDK) is essential for interaction with CBLN1; modulates interaction affinity with NLGN1, NLGN2 and NLGN3; prevents interaction with DAG1/alpha-dystroglycan; modulates interaction with alpha-latrotoxin. The Ca(2+) site is built by isoleucine 235 and asparagine 237. The segment at 318-380 (LATSTARRGN…AGGREPYPGS (63 aa)) is disordered. Polar residues predominate over residues 324–339 (RRGNSPTKEPVSQTTD). Serine 345 is a glycosylation site (O-linked (Xyl...) (heparan sulfate) serine). A helical membrane pass occupies residues 392 to 412 (GMVVGIVAAAALCILILLYAM). The Cytoplasmic segment spans residues 413–467 (YKYRNRDEGSYHVDESRNYISNSAQSNGAVVKEKQPSSAKSANKNKKNKDKEYYV). The interval 434–467 (NSAQSNGAVVKEKQPSSAKSANKNKKNKDKEYYV) is disordered. A phosphoserine mark is found at serine 449, serine 450, and serine 453.

It belongs to the neurexin family. As to quaternary structure, the cytoplasmic C-terminal region binds to CASK. Binds NLGN1, NLGN2 and NLGN3, DAG1 (alpha-dystroglycan) and alpha-latrotoxin. Binding to neuroligins is calcium-dependent, and the binding preference ranks as follow: NLGN1 &gt; NLGN4 &gt;&gt; NLGN3 &gt; NLGN2. Interacts with CBLN2 and more weakly with CBLN4. Interacts with CBLN1; interaction is CBLN1 hexamer form-dependent; CBLN1-binding is calcium-independent; isoform 1b does not interact with CBLN1. Interacts with CLSTN3. Post-translationally, O-glycosylated; contains heparan sulfate. Heparan sulfate attachment is required for synapse development by mediating interactions with neuroligins.

It is found in the presynaptic cell membrane. Neuronal cell surface protein involved in cell recognition and cell adhesion by forming intracellular junctions through binding to neuroligins. Plays a role in formation of synaptic junctions. Functions as part of a trans-synaptic complex by binding to cerebellins and postsynaptic GRID1. This interaction helps regulate the activity of NMDA and AMPA receptors at hippocampal synapses without affecting synapse formation. NRXN1B-CBLN2-GRID1 complex transduce presynaptic signals into postsynaptic NMDAR response. The sequence is that of Neurexin-1-beta from Bos taurus (Bovine).